The following is a 391-amino-acid chain: Putative alpha-ketoglutarate-dependent sulfonate dioxygenase (391 aa).

Positions 204 and 206 each coordinate Fe cation. Thr-231 and Trp-338 together coordinate 2-oxoglutarate. His-353 provides a ligand contact to Fe cation. 2-oxoglutarate contacts are provided by Arg-364 and Arg-368.

Belongs to the TfdA dioxygenase family. Fe(2+) serves as cofactor.

Its pathway is organosulfur degradation; alkanesulfonate degradation. In terms of biological role, acts as an alpha-ketoglutarate-dependent dioxygenase active on sulfonates. The sequence is that of Putative alpha-ketoglutarate-dependent sulfonate dioxygenase from Schizosaccharomyces pombe (strain 972 / ATCC 24843) (Fission yeast).